Here is a 166-residue protein sequence, read N- to C-terminus: Bile acid 7alpha-dehydratase (166 aa).

As to quaternary structure, homodimer.

It carries out the reaction 7alpha,12alpha-dihydroxy-3-oxochol-4-en-24-oyl-CoA = 12alpha-hydroxy-3-oxochola-4,6-dien-24-oyl-CoA + H2O. The catalysed reaction is 7alpha-hydroxy-3-oxochol-4-en-24-oyl-CoA = 3-oxochol-4,6-dien-24-oyl-CoA + H2O. The enzyme catalyses 7alpha,12alpha-dihydroxy-3-oxochol-4-en-24-oate = 12alpha-hydroxy-3-oxochola-4,6-dien-24-oate + H2O. It catalyses the reaction 7alpha-hydroxy-3-oxochol-4-en-24-oate = 3-oxochola-4,6-dien-24-oate + H2O. The protein operates within lipid metabolism; bile acid biosynthesis. Functions in the bile acid 7alpha-dehydroxylation pathway, which forms secondary bile acids via the 7alpha-dehydroxylation of primary bile acids, and is carried out by intestinal anaerobic bacteria. Catalyzes the dehydration step in this pathway, yielding a 3-oxo-Delta(4,6)-bile acid-CoA intermediate. In vitro, can act on the free bile acids (non CoA-conjugated) 7-alpha,12-alpha-dihydroxy-3-oxochol-4-enoate and 7-alpha-hydroxy-3-oxochol-4-enoate, but not on 7-alpha,12-alpha-dihydroxy-3-oxo-5-beta-cholanate, 3-alpha,7-alpha,12-alpha-trihydroxy-5-beta-cholanate or 7-beta-hydroxy-3-oxochol-4-enoate. The protein is Bile acid 7alpha-dehydratase of Clostridium scindens (strain JCM 10418 / VPI 12708).